A 189-amino-acid polypeptide reads, in one-letter code: NADH-quinone oxidoreductase subunit B (189 aa).

[4Fe-4S] cluster contacts are provided by Cys-39, Cys-40, Cys-104, and Cys-135.

It belongs to the complex I 20 kDa subunit family. As to quaternary structure, NDH-1 is composed of 14 different subunits. Subunits NuoB, C, D, E, F, and G constitute the peripheral sector of the complex. [4Fe-4S] cluster is required as a cofactor.

The protein localises to the cell inner membrane. It catalyses the reaction a quinone + NADH + 5 H(+)(in) = a quinol + NAD(+) + 4 H(+)(out). In terms of biological role, NDH-1 shuttles electrons from NADH, via FMN and iron-sulfur (Fe-S) centers, to quinones in the respiratory chain. The immediate electron acceptor for the enzyme in this species is believed to be a menaquinone. Couples the redox reaction to proton translocation (for every two electrons transferred, four hydrogen ions are translocated across the cytoplasmic membrane), and thus conserves the redox energy in a proton gradient. The sequence is that of NADH-quinone oxidoreductase subunit B from Chlorobium phaeobacteroides (strain DSM 266 / SMG 266 / 2430).